The primary structure comprises 260 residues: Ribose-5-phosphate isomerase (260 aa).

It belongs to the ribose 5-phosphate isomerase family.

Its subcellular location is the cytoplasm. The catalysed reaction is aldehydo-D-ribose 5-phosphate = D-ribulose 5-phosphate. It participates in carbohydrate degradation; pentose phosphate pathway; D-ribose 5-phosphate from D-ribulose 5-phosphate (non-oxidative stage): step 1/1. The polypeptide is Ribose-5-phosphate isomerase (RKI1) (Candida glabrata (strain ATCC 2001 / BCRC 20586 / JCM 3761 / NBRC 0622 / NRRL Y-65 / CBS 138) (Yeast)).